The sequence spans 199 residues: Peptidyl-tRNA hydrolase (199 aa).

Y15 serves as a coordination point for tRNA. The active-site Proton acceptor is the H20. The tRNA site is built by Y66, N68, and N114.

It belongs to the PTH family. As to quaternary structure, monomer.

The protein resides in the cytoplasm. It carries out the reaction an N-acyl-L-alpha-aminoacyl-tRNA + H2O = an N-acyl-L-amino acid + a tRNA + H(+). Functionally, hydrolyzes ribosome-free peptidyl-tRNAs (with 1 or more amino acids incorporated), which drop off the ribosome during protein synthesis, or as a result of ribosome stalling. Its function is as follows. Catalyzes the release of premature peptidyl moieties from peptidyl-tRNA molecules trapped in stalled 50S ribosomal subunits, and thus maintains levels of free tRNAs and 50S ribosomes. This is Peptidyl-tRNA hydrolase from Burkholderia ambifaria (strain MC40-6).